Here is a 179-residue protein sequence, read N- to C-terminus: Large ribosomal subunit protein uL5 (179 aa).

It belongs to the universal ribosomal protein uL5 family. As to quaternary structure, part of the 50S ribosomal subunit; part of the 5S rRNA/L5/L18/L25 subcomplex. Contacts the 5S rRNA and the P site tRNA. Forms a bridge to the 30S subunit in the 70S ribosome.

Its function is as follows. This is one of the proteins that bind and probably mediate the attachment of the 5S RNA into the large ribosomal subunit, where it forms part of the central protuberance. In the 70S ribosome it contacts protein S13 of the 30S subunit (bridge B1b), connecting the 2 subunits; this bridge is implicated in subunit movement. Contacts the P site tRNA; the 5S rRNA and some of its associated proteins might help stabilize positioning of ribosome-bound tRNAs. The protein is Large ribosomal subunit protein uL5 of Exiguobacterium sibiricum (strain DSM 17290 / CCUG 55495 / CIP 109462 / JCM 13490 / 255-15).